The following is a 1719-amino-acid chain: 5'-3' exoribonuclease 1 (1719 aa).

The span at 1268–1298 (HKSGFTDHSVRHQQRKHDSQRKFKEEYKSPK) shows a compositional bias: basic and acidic residues. The disordered stretch occupies residues 1268–1317 (HKSGFTDHSVRHQQRKHDSQRKFKEEYKSPKAECQSQKLSSKQTSGGSAR). Positions 1301–1314 (CQSQKLSSKQTSGG) are enriched in polar residues. Serine 1382 bears the Phosphoserine mark. Over residues 1397–1430 (ILKIDSPDTRDSKNDMKKSDNEATVSSRRDERGV) the composition is skewed to basic and acidic residues. 2 disordered regions span residues 1397-1445 (ILKI…KPHG) and 1634-1719 (ENKE…KPSE). Residues 1638-1660 (AQSSQATPLQTNKPGSSEATKMT) are compositionally biased toward polar residues. A compositionally biased stretch (low complexity) spans 1661-1680 (PQESPPASSSSSQAAQPVSS). The segment covering 1681 to 1690 (HVETASQGHV) has biased composition (polar residues).

The protein belongs to the 5'-3' exonuclease family. Found in a mRNP complex with UPF1, UPF2, UPF3B and XRN1. Associates with alpha and beta tubulins. Interacts with DIS3L2. Interacts with ZC3HAV1 in an RNA-dependent manner. Interacts with ZFP36L1. Interacts with TRIM71 (via NHL repeats) in an RNA-dependent manner. Interacts with YTHDC2 (via ANK repeats). Interacts with DHX34; the interaction is RNA-independent. In terms of tissue distribution, expressed in heart, brain (spinal cord, dorsal root and superior cervical ganglia, neurons of the cerebrum and brain stem), peripheral nerve fibers in the skin and intestine, spleen, lung, liver, skeletal muscle, kidney and testis.

The protein resides in the cytoplasm. Functionally, major 5'-3' exoribonuclease involved in mRNA decay. Required for the 5'-3'-processing of the G4 tetraplex-containing DNA and RNA substrates. The kinetic of hydrolysis is faster for G4 RNA tetraplex than for G4 DNA tetraplex and monomeric RNA tetraplex. Binds to RNA and DNA. Plays a role in replication-dependent histone mRNA degradation. In Mus musculus (Mouse), this protein is 5'-3' exoribonuclease 1.